Reading from the N-terminus, the 232-residue chain is Izumo sperm-egg fusion protein 4 (232 aa).

An N-terminal signal peptide occupies residues Met-1–Ala-15. Residues Asn-24 and Asn-219 are each glycosylated (N-linked (GlcNAc...) asparagine).

The protein belongs to the Izumo family. As to expression, detected in sperm.

The protein localises to the secreted. This Homo sapiens (Human) protein is Izumo sperm-egg fusion protein 4 (IZUMO4).